Here is a 118-residue protein sequence, read N- to C-terminus: Large ribosomal subunit protein uL18 (118 aa).

Belongs to the universal ribosomal protein uL18 family. As to quaternary structure, part of the 50S ribosomal subunit; part of the 5S rRNA/L5/L18/L25 subcomplex. Contacts the 5S and 23S rRNAs.

Its function is as follows. This is one of the proteins that bind and probably mediate the attachment of the 5S RNA into the large ribosomal subunit, where it forms part of the central protuberance. In Campylobacter jejuni subsp. jejuni serotype O:2 (strain ATCC 700819 / NCTC 11168), this protein is Large ribosomal subunit protein uL18.